A 164-amino-acid chain; its full sequence is Cytochrome c-type biogenesis protein CcmE (164 aa).

Residues 1 to 8 lie on the Cytoplasmic side of the membrane; it reads MNPRRKKR. A helical; Signal-anchor for type II membrane protein membrane pass occupies residues 9–29; it reads LTLAVALIGGVAAIASLLLYA. Over 30–164 the chain is Periplasmic; sequence LNSNLNLFFT…EDQSKAGGYK (135 aa). Heme-binding residues include H131 and Y135. Residues 140-164 are disordered; the sequence is VAEAMGQSHEKLDYSEDQSKAGGYK. The span at 147-158 shows a compositional bias: basic and acidic residues; that stretch reads SHEKLDYSEDQS.

Belongs to the CcmE/CycJ family.

Its subcellular location is the cell inner membrane. Heme chaperone required for the biogenesis of c-type cytochromes. Transiently binds heme delivered by CcmC and transfers the heme to apo-cytochromes in a process facilitated by CcmF and CcmH. This chain is Cytochrome c-type biogenesis protein CcmE, found in Shewanella piezotolerans (strain WP3 / JCM 13877).